Reading from the N-terminus, the 288-residue chain is Acetyl-coenzyme A carboxylase carboxyl transferase subunit beta (288 aa).

Residues 34–288 (LWVKCSRCNE…ANILSLHGTN (255 aa)) enclose the CoA carboxyltransferase N-terminal domain. 4 residues coordinate Zn(2+): Cys-38, Cys-41, Cys-57, and Cys-60. A C4-type zinc finger spans residues 38-60 (CSRCNEILYTKELDKNFKVCHKC).

This sequence belongs to the AccD/PCCB family. As to quaternary structure, acetyl-CoA carboxylase is a heterohexamer composed of biotin carboxyl carrier protein (AccB), biotin carboxylase (AccC) and two subunits each of ACCase subunit alpha (AccA) and ACCase subunit beta (AccD). It depends on Zn(2+) as a cofactor.

It localises to the cytoplasm. It carries out the reaction N(6)-carboxybiotinyl-L-lysyl-[protein] + acetyl-CoA = N(6)-biotinyl-L-lysyl-[protein] + malonyl-CoA. The protein operates within lipid metabolism; malonyl-CoA biosynthesis; malonyl-CoA from acetyl-CoA: step 1/1. In terms of biological role, component of the acetyl coenzyme A carboxylase (ACC) complex. Biotin carboxylase (BC) catalyzes the carboxylation of biotin on its carrier protein (BCCP) and then the CO(2) group is transferred by the transcarboxylase to acetyl-CoA to form malonyl-CoA. The sequence is that of Acetyl-coenzyme A carboxylase carboxyl transferase subunit beta from Desulforamulus reducens (strain ATCC BAA-1160 / DSM 100696 / MI-1) (Desulfotomaculum reducens).